We begin with the raw amino-acid sequence, 301 residues long: Probable alpha-L-glutamate ligase (301 aa).

Residues 104–287 form the ATP-grasp domain; that stretch reads LQLLSRKGIG…IAGLIVAYME (184 aa). ATP is bound by residues lysine 141, 178–179, aspartate 187, and 211–213; these read EF and RSN. Residues aspartate 248, glutamate 260, and asparagine 262 each coordinate Mg(2+). Mn(2+) contacts are provided by aspartate 248, glutamate 260, and asparagine 262.

This sequence belongs to the RimK family. Requires Mg(2+) as cofactor. Mn(2+) is required as a cofactor.

The protein is Probable alpha-L-glutamate ligase of Cellvibrio japonicus (strain Ueda107) (Pseudomonas fluorescens subsp. cellulosa).